A 1060-amino-acid polypeptide reads, in one-letter code: Isoleucine--tRNA ligase (1060 aa).

Residues 55-65 (PTANGTPGVHH) carry the 'HIGH' region motif. Positions 608–612 (KMSKH) match the 'KMSKS' region motif. Position 611 (K611) interacts with ATP.

Belongs to the class-I aminoacyl-tRNA synthetase family. IleS type 2 subfamily. Monomer. Zn(2+) serves as cofactor.

It is found in the cytoplasm. It catalyses the reaction tRNA(Ile) + L-isoleucine + ATP = L-isoleucyl-tRNA(Ile) + AMP + diphosphate. In terms of biological role, catalyzes the attachment of isoleucine to tRNA(Ile). As IleRS can inadvertently accommodate and process structurally similar amino acids such as valine, to avoid such errors it has two additional distinct tRNA(Ile)-dependent editing activities. One activity is designated as 'pretransfer' editing and involves the hydrolysis of activated Val-AMP. The other activity is designated 'posttransfer' editing and involves deacylation of mischarged Val-tRNA(Ile). The polypeptide is Isoleucine--tRNA ligase (Thermobifida fusca (strain YX)).